Consider the following 263-residue polypeptide: Neuferricin (263 aa).

The first 22 residues, 1-22 (MLRICGLGVVLSLAVAAVAVMA), serve as a signal peptide directing secretion. A Cytochrome b5 heme-binding domain is found at 35 to 134 (IRLFLPEELA…KNYVFVGRLV (100 aa)). Residues 220–249 (VRTTGPPSDQQDNPRHSNHGDLDNPNLEEY) are disordered. Residues 231–241 (DNPRHSNHGDL) are compositionally biased toward basic and acidic residues.

The protein belongs to the cytochrome b5 family. MAPR subfamily. Expressed in various tissues including brain, heart, adrenal gland, and kidney. In the brain, mainly expressed in pyramidal cells around the CA3 region of Ammon horn in hippocampus. Present in brain (at protein level).

It localises to the secreted. Its function is as follows. Heme-binding protein which promotes neuronal but not astrocyte differentiation. The chain is Neuferricin from Mus musculus (Mouse).